The sequence spans 383 residues: Presenilin-associated rhomboid-like protein A, mitochondrial (383 aa).

The transit peptide at 1 to 37 directs the protein to the mitochondrion; the sequence is MAWRSCFMKWTQINSINASSLCPKSTRLNIHPQQRCG. Residues 35 to 75 form a disordered region; it reads RCGFRKTERPSESKKGVQETEAEAGGHNRAVPPKPVPPLPP. Residues 38–83 lie on the Mitochondrial matrix side of the membrane; it reads FRKTERPSESKKGVQETEAEAGGHNRAVPPKPVPPLPPRRPHQLFR. Over residues 39 to 52 the composition is skewed to basic and acidic residues; the sequence is RKTERPSESKKGVQ. Positions 66-75 are enriched in pro residues; it reads PPKPVPPLPP. The chain crosses the membrane as a helical span at residues 84 to 104; sequence PLVFTVGFTGCSFGAAAILQY. Residues 105–168 are Mitochondrial intermembrane-facing; sequence ESVKSRVQLA…FWSGLSEGQK (64 aa). A helical membrane pass occupies residues 169–189; the sequence is TVTGIIALNTVVLCCWRVPAM. The Mitochondrial matrix segment spans residues 190–219; sequence QRFLVKYFTSNPASKTRCLPMVLSSFSHYS. A helical membrane pass occupies residues 220–240; the sequence is VIHMVVNMYVLWTFSSSIVSL. Topologically, residues 241–245 are mitochondrial intermembrane; it reads LGREQ. A helical membrane pass occupies residues 246 to 266; sequence FLALYLSGGVISTFVSYVFKT. At 267–271 the chain is on the mitochondrial matrix side; that stretch reads ATGRL. The helical transmembrane segment at 272–292 threads the bilayer; that stretch reads GPSLGASGSIMTVLAAVCTKI. The active-site Nucleophile is serine 278. Topologically, residues 293–298 are mitochondrial intermembrane; the sequence is PEAKLG. The chain crosses the membrane as a helical span at residues 299–319; sequence IVLLPVISFSAGNALKALVAL. Over 320–334 the chain is Mitochondrial matrix; the sequence is DIAGLVLGWRFFDHA. A helical transmembrane segment spans residues 335–355; it reads AHLGGALFGVWYIGYGHELIW. Histidine 336 is a catalytic residue. At 356-383 the chain is on the mitochondrial intermembrane side; that stretch reads RKREPLIKFWHELRNMSPGRPGPGGGGG.

It belongs to the peptidase S54 family.

The protein resides in the mitochondrion inner membrane. It catalyses the reaction Cleaves type-1 transmembrane domains using a catalytic dyad composed of serine and histidine that are contributed by different transmembrane domains.. Functionally, required for the control of apoptosis during postnatal growth. Essential for proteolytic processing of an antiapoptotic form of opa1 which prevents the release of mitochondrial cytochrome c in response to intrinsic apoptotic signals. This chain is Presenilin-associated rhomboid-like protein A, mitochondrial (parla), found in Danio rerio (Zebrafish).